A 364-amino-acid polypeptide reads, in one-letter code: Cyclin-D3-2 (364 aa).

The interval 331-364 (PPGRPIKRGAAAATTADPLPADEESRDAWPPYAA) is disordered. Positions 340–349 (AAAATTADPL) are enriched in low complexity.

It belongs to the cyclin family. Cyclin D subfamily.

The protein is Cyclin-D3-2 (CYCD3-2) of Oryza sativa subsp. japonica (Rice).